The following is a 280-amino-acid chain: Large ribosomal subunit protein uL2 (280 aa).

2 disordered regions span residues 33–55 (LTEG…RRRG) and 199–266 (DNSN…KASQ). The segment covering 209 to 219 (GRMRHKGKRPS) has biased composition (basic residues).

The protein belongs to the universal ribosomal protein uL2 family. In terms of assembly, part of the 50S ribosomal subunit. Forms a bridge to the 30S subunit in the 70S ribosome.

One of the primary rRNA binding proteins. Required for association of the 30S and 50S subunits to form the 70S ribosome, for tRNA binding and peptide bond formation. It has been suggested to have peptidyltransferase activity; this is somewhat controversial. Makes several contacts with the 16S rRNA in the 70S ribosome. The chain is Large ribosomal subunit protein uL2 from Ruegeria sp. (strain TM1040) (Silicibacter sp.).